Reading from the N-terminus, the 5207-residue chain is E3 ubiquitin-protein ligase RNF213 (5207 aa).

2 disordered regions span residues 1-20 and 27-365; these read MECPSCQHVSKEETPKFCSQ and PAAP…EADV. Residues 34–43 are compositionally biased toward polar residues; the sequence is SENNNSTMAS. A compositionally biased stretch (basic residues) spans 89-100; it reads KKKKRKKKKKGN. 2 stretches are compositionally biased toward low complexity: residues 101-117 and 136-157; these read KSASSELASLPLSPASP and SQAQQSGPTGQPSQPPGTATTP. Positions 188–197 are enriched in polar residues; the sequence is SEAQSSPQFQ. Ser-208 and Ser-217 each carry phosphoserine. A compositionally biased stretch (polar residues) spans 248–266; that stretch reads GGSSEPGTELQTTEQQAGA. 3 stretches are compositionally biased toward basic and acidic residues: residues 285-294, 309-346, and 353-362; these read AGKEMKEKTQ, HCQEAETKTKDEMAAAEEKVGKNEQGEPEDLKKPEGKN, and KNEKEQKNQE. Residues 343 to 374 adopt a coiled-coil conformation; that stretch reads EGKNRSAAAVKNEKEQKNQEADVQEVKASTLS. Lys-1151 participates in a covalent cross-link: Glycyl lysine isopeptide (Lys-Gly) (interchain with G-Cter in SUMO2). Ser-1258 is modified (phosphoserine). ATP-binding positions include 1995-2000, Glu-2098, Asp-2155, and Arg-2216; that span reads GVGKSL. The residue at position 2273 (Ser-2273) is a Phosphoserine. 2 residues coordinate ATP: Lys-2499 and Ser-2574. Zn(2+) is bound by residues Cys-3997, Cys-4000, Cys-4012, His-4014, Cys-4017, Cys-4020, Cys-4032, Cys-4035, Cys-4505, and His-4509. The RING-type zinc finger occupies 3997 to 4036; the sequence is CSICLGDAKDPVCLPCDHVHCLRCLRAWFASEQMICPYCL. The RZ-type zinc-finger motif lies at 4483-4555; that stretch reads MPEDLLAQAR…VKDKADRTQT (73 aa). Catalysis depends on Cys-4516, which acts as the Nucleophile; for E3 ubiquitin-lipopolysaccharide ligase activity. Residues Cys-4525 and Cys-4528 each coordinate Zn(2+).

Belongs to the AAA ATPase family. As to quaternary structure, monomer. Interacts with UBE2L3/UBCH7; UBE2L3/UBCH7 is the most efficient ubiquitin-conjugating enzyme E2 for the ubiquitin ligase activity. Interacts with UBE2N/UBC13; promoting 'Lys-63'-linked ubiquitination of target proteins. (Microbial infection) Interacts with M.tuberculosis protein Rv3655c, which impairs caspase-8 activation and suppresses macrophage apoptosis by blocking the extrinsic pathway. Post-translationally, autoubiquitinated. In terms of tissue distribution, widely expressed (at protein level). Major isoform detected in all tissues examined. As to expression, minor isoform with restricted expression.

The protein localises to the cytoplasm. The protein resides in the cytosol. Its subcellular location is the lipid droplet. The enzyme catalyses S-ubiquitinyl-[E2 ubiquitin-conjugating enzyme]-L-cysteine + [acceptor protein]-L-lysine = [E2 ubiquitin-conjugating enzyme]-L-cysteine + N(6)-ubiquitinyl-[acceptor protein]-L-lysine.. It catalyses the reaction ATP + H2O = ADP + phosphate + H(+). It participates in protein modification; protein ubiquitination. Atypical E3 ubiquitin ligase that can catalyze ubiquitination of both proteins and lipids, and which is involved in various processes, such as lipid metabolism, angiogenesis and cell-autonomous immunity. Acts as a key immune sensor by catalyzing ubiquitination of the lipid A moiety of bacterial lipopolysaccharide (LPS) via its RZ-type zinc-finger: restricts the proliferation of cytosolic bacteria, such as Salmonella, by generating the bacterial ubiquitin coat through the ubiquitination of LPS. Also acts indirectly by mediating the recruitment of the LUBAC complex, which conjugates linear polyubiquitin chains. Ubiquitination of LPS triggers cell-autonomous immunity, such as antibacterial autophagy, leading to degradation of the microbial invader. Involved in lipid metabolism by regulating fat storage and lipid droplet formation; act by inhibiting the lipolytic process. Also regulates lipotoxicity by inhibiting desaturation of fatty acids. Also acts as an E3 ubiquitin-protein ligase via its RING-type zinc finger: mediates 'Lys-63'-linked ubiquitination of target proteins. Involved in the non-canonical Wnt signaling pathway in vascular development: acts by mediating ubiquitination and degradation of FLNA and NFATC2 downstream of RSPO3, leading to inhibit the non-canonical Wnt signaling pathway and promoting vessel regression. Also has ATPase activity; ATPase activity is required for ubiquitination of LPS. The polypeptide is E3 ubiquitin-protein ligase RNF213 (Homo sapiens (Human)).